Consider the following 1358-residue polypeptide: Protein STU1 (1358 aa).

Disordered regions lie at residues 915-950 and 970-990; these read FVAD…SHGF and QPET…DESN. The span at 926–949 shows a compositional bias: basic and acidic residues; the sequence is DDTKKNGSDVVDHEEIRDHEESHG. Positions 973–990 are enriched in acidic residues; the sequence is TVDENVDPMEVDSPDESN.

It belongs to the CLASP family. Interacts with microtubules.

It localises to the cytoplasm. It is found in the cytoskeleton. The protein localises to the nucleus. Its subcellular location is the spindle. In terms of biological role, microtubule binding protein that promotes the stabilization of dynamic microtubules. Required for mitotic spindle formation. This chain is Protein STU1 (STU1), found in Kluyveromyces lactis (strain ATCC 8585 / CBS 2359 / DSM 70799 / NBRC 1267 / NRRL Y-1140 / WM37) (Yeast).